The sequence spans 155 residues: 6,7-dimethyl-8-ribityllumazine synthase (155 aa).

5-amino-6-(D-ribitylamino)uracil contacts are provided by residues Phe23, 57–59, and 81–83; these read AFE and AVI. Residue 86 to 87 coordinates (2S)-2-hydroxy-3-oxobutyl phosphate; the sequence is ST. His89 acts as the Proton donor in catalysis. Phe114 is a binding site for 5-amino-6-(D-ribitylamino)uracil. Arg128 contributes to the (2S)-2-hydroxy-3-oxobutyl phosphate binding site.

Belongs to the DMRL synthase family.

The enzyme catalyses (2S)-2-hydroxy-3-oxobutyl phosphate + 5-amino-6-(D-ribitylamino)uracil = 6,7-dimethyl-8-(1-D-ribityl)lumazine + phosphate + 2 H2O + H(+). Its pathway is cofactor biosynthesis; riboflavin biosynthesis; riboflavin from 2-hydroxy-3-oxobutyl phosphate and 5-amino-6-(D-ribitylamino)uracil: step 1/2. Functionally, catalyzes the formation of 6,7-dimethyl-8-ribityllumazine by condensation of 5-amino-6-(D-ribitylamino)uracil with 3,4-dihydroxy-2-butanone 4-phosphate. This is the penultimate step in the biosynthesis of riboflavin. In Geobacter sp. (strain M21), this protein is 6,7-dimethyl-8-ribityllumazine synthase.